A 258-amino-acid chain; its full sequence is Thiazole synthase (258 aa).

Lys98 (schiff-base intermediate with DXP) is an active-site residue. Residues Gly159, 185–186 (AG), and 207–208 (NT) contribute to the 1-deoxy-D-xylulose 5-phosphate site.

It belongs to the ThiG family. As to quaternary structure, homotetramer. Forms heterodimers with either ThiH or ThiS.

The protein localises to the cytoplasm. It carries out the reaction [ThiS sulfur-carrier protein]-C-terminal-Gly-aminoethanethioate + 2-iminoacetate + 1-deoxy-D-xylulose 5-phosphate = [ThiS sulfur-carrier protein]-C-terminal Gly-Gly + 2-[(2R,5Z)-2-carboxy-4-methylthiazol-5(2H)-ylidene]ethyl phosphate + 2 H2O + H(+). The protein operates within cofactor biosynthesis; thiamine diphosphate biosynthesis. Catalyzes the rearrangement of 1-deoxy-D-xylulose 5-phosphate (DXP) to produce the thiazole phosphate moiety of thiamine. Sulfur is provided by the thiocarboxylate moiety of the carrier protein ThiS. In vitro, sulfur can be provided by H(2)S. This chain is Thiazole synthase, found in Bacillus thuringiensis subsp. konkukian (strain 97-27).